An 81-amino-acid chain; its full sequence is Large ribosomal subunit protein bL27 (81 aa).

Over residues M1–K11 the composition is skewed to polar residues. Residues M1–R20 form a disordered region.

Belongs to the bacterial ribosomal protein bL27 family.

This chain is Large ribosomal subunit protein bL27, found in Borreliella afzelii (strain PKo) (Borrelia afzelii).